Reading from the N-terminus, the 107-residue chain is UPF0145 protein Spro_1658 (107 aa).

This sequence belongs to the UPF0145 family.

The chain is UPF0145 protein Spro_1658 from Serratia proteamaculans (strain 568).